Consider the following 338-residue polypeptide: D-erythrose-4-phosphate dehydrogenase (338 aa).

Residue 12-13 (RI) coordinates NAD(+). Substrate is bound by residues 154 to 156 (SCT), arginine 200, 213 to 214 (TK), and arginine 236. Cysteine 155 acts as the Nucleophile in catalysis. Position 318 (asparagine 318) interacts with NAD(+).

It belongs to the glyceraldehyde-3-phosphate dehydrogenase family. Epd subfamily. In terms of assembly, homotetramer.

It localises to the cytoplasm. It catalyses the reaction D-erythrose 4-phosphate + NAD(+) + H2O = 4-phospho-D-erythronate + NADH + 2 H(+). It functions in the pathway cofactor biosynthesis; pyridoxine 5'-phosphate biosynthesis; pyridoxine 5'-phosphate from D-erythrose 4-phosphate: step 1/5. Its function is as follows. Catalyzes the NAD-dependent conversion of D-erythrose 4-phosphate to 4-phosphoerythronate. In Pectobacterium atrosepticum (strain SCRI 1043 / ATCC BAA-672) (Erwinia carotovora subsp. atroseptica), this protein is D-erythrose-4-phosphate dehydrogenase.